The chain runs to 521 residues: Probable feruloyl esterase B (521 aa).

A signal peptide spans 1-17 (MKVSSLLSVALPGAALA). 2 disulfides stabilise this stretch: Cys-26/Cys-72 and Cys-61/Cys-111. 6 N-linked (GlcNAc...) asparagine glycosylation sites follow: Asn-37, Asn-51, Asn-77, Asn-95, Asn-144, and Asn-177. Cystine bridges form between Cys-184-Cys-438, Cys-253-Cys-270, and Cys-279-Cys-288. Ser-185 (acyl-ester intermediate) is an active-site residue. Ca(2+) is bound by residues Asp-254, Asp-257, Ala-259, Asp-261, and Ile-263. Asn-284, Asn-347, Asn-352, and Asn-378 each carry an N-linked (GlcNAc...) asparagine glycan. Residues Asp-397 and His-437 each act as charge relay system in the active site. N-linked (GlcNAc...) asparagine glycosylation is found at Asn-488 and Asn-511. Cysteines 498 and 520 form a disulfide.

This sequence belongs to the tannase family.

The protein localises to the secreted. The catalysed reaction is feruloyl-polysaccharide + H2O = ferulate + polysaccharide.. Its function is as follows. Involved in degradation of plant cell walls. Hydrolyzes the feruloyl-arabinose ester bond in arabinoxylans as well as the feruloyl-galactose and feruloyl-arabinose ester bonds in pectin. The sequence is that of Probable feruloyl esterase B (faeB) from Aspergillus niger (strain ATCC MYA-4892 / CBS 513.88 / FGSC A1513).